A 284-amino-acid chain; its full sequence is Diaminopimelate epimerase (284 aa).

Positions 21, 54, and 74 each coordinate substrate. The Proton donor role is filled by Cys83. Substrate contacts are provided by residues 84-85, Asn167, Asn200, and 218-219; these read GN and ER. The active-site Proton acceptor is Cys227. Substrate is bound at residue 228 to 229; the sequence is GS.

The protein belongs to the diaminopimelate epimerase family. Homodimer.

The protein localises to the cytoplasm. The enzyme catalyses (2S,6S)-2,6-diaminopimelate = meso-2,6-diaminopimelate. The protein operates within amino-acid biosynthesis; L-lysine biosynthesis via DAP pathway; DL-2,6-diaminopimelate from LL-2,6-diaminopimelate: step 1/1. In terms of biological role, catalyzes the stereoinversion of LL-2,6-diaminopimelate (L,L-DAP) to meso-diaminopimelate (meso-DAP), a precursor of L-lysine and an essential component of the bacterial peptidoglycan. The chain is Diaminopimelate epimerase from Buchnera aphidicola subsp. Acyrthosiphon pisum (strain APS) (Acyrthosiphon pisum symbiotic bacterium).